Here is a 186-residue protein sequence, read N- to C-terminus: ATP synthase subunit delta (186 aa).

It belongs to the ATPase delta chain family. F-type ATPases have 2 components, F(1) - the catalytic core - and F(0) - the membrane proton channel. F(1) has five subunits: alpha(3), beta(3), gamma(1), delta(1), epsilon(1). CF(0) has four main subunits: a(1), b(1), b'(1) and c(10-14). The alpha and beta chains form an alternating ring which encloses part of the gamma chain. F(1) is attached to F(0) by a central stalk formed by the gamma and epsilon chains, while a peripheral stalk is formed by the delta, b and b' chains.

Its subcellular location is the cell inner membrane. In terms of biological role, f(1)F(0) ATP synthase produces ATP from ADP in the presence of a proton or sodium gradient. F-type ATPases consist of two structural domains, F(1) containing the extramembraneous catalytic core and F(0) containing the membrane proton channel, linked together by a central stalk and a peripheral stalk. During catalysis, ATP synthesis in the catalytic domain of F(1) is coupled via a rotary mechanism of the central stalk subunits to proton translocation. Functionally, this protein is part of the stalk that links CF(0) to CF(1). It either transmits conformational changes from CF(0) to CF(1) or is implicated in proton conduction. This is ATP synthase subunit delta from Roseobacter denitrificans (strain ATCC 33942 / OCh 114) (Erythrobacter sp. (strain OCh 114)).